A 484-amino-acid chain; its full sequence is Gasdermin-D (484 aa).

Tyr-37 bears the Phosphotyrosine mark. The residue at position 56 (Cys-56) is an S-(2-succinyl)cysteine. 2 consecutive transmembrane segments (beta stranded) span residues 91 to 97 (QGSVELA) and 103 to 108 (KIAGGA). Tyr-158 carries the post-translational modification Phosphotyrosine. Beta stranded transmembrane passes span 180–186 (GSGRFSL) and 191–197 (CLQGEGQ). Ser-185 carries the post-translational modification Phosphoserine. Cys-191 and Cys-268 each carry S-(2-succinyl)cysteine. A lipid anchor (S-palmitoyl cysteine) is attached at Cys-191. Residues 277–296 (VPAEGAFTEDFQGLRAEVET) are linker helix loop. At Cys-309 the chain carries S-(2-succinyl)cysteine. A glycan (O-linked (GlcNAc) serine) is linked at Ser-338. The residue at position 467 (Cys-467) is an S-(2-succinyl)cysteine.

This sequence belongs to the gasdermin family. As to quaternary structure, homooligomer; homooligomeric ring-shaped pore complex containing 27-28 subunits when inserted in the membrane. Homooligomerization is promoted by the mTORC1 complex in macrophages. In response to a canonical inflammasome stimulus, such as nigericin, recruited to NLRP3 inflammasone with similar kinetics to that of uncleaved CASP1 precursor. Although this recruitment is also observed in the absence of PYCARD, it is more efficient in its presence. Post-translationally, cleavage at Asp-275 by CASP1 (mature and uncleaved precursor forms), CASP4, CASP5 or CASP8 relieves autoinhibition and is sufficient to initiate pyroptosis. Cleavage by CASP1 and CASP4 is not strictly dependent on the consensus cleavage site on GSDMD but depends on an exosite interface on CASP1 that recognizes and binds the Gasdermin-D, C-terminal (GSDMD-CT) part. Cleavage by CASP8 takes place following inactivation of MAP3K7/TAK1 by Yersinia toxin YopJ. Cleavage at Asp-87 by CASP3 or CASP7 inactivates the ability to mediate pyroptosis, but generates the Gasdermin-D, p13 chain, which translocates to the nucleus and acts as a transcription regulator. Cleavage by papain allergen generates the Gasdermin-D, p40 chain. Palmitoylated at Cys-191 by ZDHHC5 and ZDHHC9 in response to microbial infection and danger signals. Palmitoylation takes place before cleavage by caspases (CASP1, CASP4, CASP5 or CASP8) and is required for membrane translocation and pore formation. Depalmitoylated by LYPLA2. In terms of processing, succination of Cys-191 by the Krebs cycle intermediate fumarate, which leads to S-(2-succinyl)cysteine residues, inhibits processing by caspases, and ability to initiate pyroptosis. Succination modification is catalyzed by a non-enzymatic reaction caused by an accumulation of fumarate. Post-translationally, glycosylated: O-GlcNAcylation by OGT leads to reduced cleavage by CASP4 and decreased LPS-induced endothelial cell pyroptosis. (Microbial infection) Cleaved and inactivated by Protease 3C from Human enterovirus 71 (EV71), preventing GSDMD-mediated pyroptosis. In terms of processing, (Microbial infection) Cleaved and inactivated by the 3C-like proteinase nsp5 from human coronavirus SARS-CoV-2, preventing GSDMD-mediated pyroptosis. Post-translationally, (Microbial infection) Ubiquitinated by S.flexneri IpaH7.8, leading to its degradation by the proteasome. Expressed in the suprabasal cells of esophagus, as well as in the isthmus/neck, pit, and gland of the stomach, suggesting preferential expression in differentiating cells.

It is found in the cytoplasm. It localises to the cytosol. The protein localises to the inflammasome. Its subcellular location is the cell membrane. The protein resides in the secreted. It is found in the mitochondrion membrane. It localises to the nucleus. With respect to regulation, the full-length protein before cleavage is inactive: intramolecular interactions between N- and C-terminal domains mediate autoinhibition in the absence of activation signal. The intrinsic pyroptosis-inducing activity is carried by the released N-terminal moiety (Gasdermin-D, N-terminal) following cleavage by caspases CASP1, CASP4, CASP5 or CASP8. Cleavage at Asp-87 by CASP3 or CASP7 inactivates the ability to mediate pyroptosis. Homooligomerization and pore formation is specifically inhibited by VHH(GSDMD-1) and, to a lesser extent, VHH(GSDMD-2) nanobodies, protecting against excessive pyroptosis. Inhibited by small molecule NU6300, which covalently reacts with Cys-191, thereby preventing palmitoylation and pyroptosis. Its function is as follows. Precursor of a pore-forming protein that plays a key role in host defense against pathogen infection and danger signals. This form constitutes the precursor of the pore-forming protein: upon cleavage, the released N-terminal moiety (Gasdermin-D, N-terminal) binds to membranes and forms pores, triggering pyroptosis. Promotes pyroptosis in response to microbial infection and danger signals. Produced by the cleavage of gasdermin-D by inflammatory caspases CASP1, CASP4 or CASP5 in response to canonical, as well as non-canonical (such as cytosolic LPS) inflammasome activators. After cleavage, moves to the plasma membrane where it strongly binds to inner leaflet lipids, including monophosphorylated phosphatidylinositols, such as phosphatidylinositol 4-phosphate, bisphosphorylated phosphatidylinositols, such as phosphatidylinositol (4,5)-bisphosphate, as well as phosphatidylinositol (3,4,5)-bisphosphate, and more weakly to phosphatidic acid and phosphatidylserine. Homooligomerizes within the membrane and forms pores of 10-15 nanometers (nm) of inner diameter, allowing the release of mature interleukin-1 (IL1B and IL18) and triggering pyroptosis. Gasdermin pores also allow the release of mature caspase-7 (CASP7). In some, but not all, cells types, pyroptosis is followed by pyroptotic cell death, which is caused by downstream activation of ninjurin-1 (NINJ1), which mediates membrane rupture (cytolysis). Also forms pores in the mitochondrial membrane, resulting in release of mitochondrial DNA (mtDNA) into the cytosol. Gasdermin-D, N-terminal released from pyroptotic cells into the extracellular milieu rapidly binds to and kills both Gram-negative and Gram-positive bacteria, without harming neighboring mammalian cells, as it does not disrupt the plasma membrane from the outside due to lipid-binding specificity. Under cell culture conditions, also active against intracellular bacteria, such as Listeria monocytogenes. Also active in response to MAP3K7/TAK1 inactivation by Yersinia toxin YopJ, which triggers cleavage by CASP8 and subsequent activation. Required for mucosal tissue defense against enteric pathogens. Activation of the non-canonical inflammasome in brain endothelial cells can lead to excessive pyroptosis, leading to blood-brain barrier breakdown. Strongly binds to bacterial and mitochondrial lipids, including cardiolipin. Does not bind to unphosphorylated phosphatidylinositol, phosphatidylethanolamine nor phosphatidylcholine. Functionally, transcription coactivator produced by the cleavage by CASP3 or CASP7 in the upper small intestine in response to dietary antigens. Required to maintain food tolerance in small intestine: translocates to the nucleus and acts as a coactivator for STAT1 to induce the transcription of CIITA and MHC class II molecules, which in turn induce type 1 regulatory T (Tr1) cells in upper small intestine. In terms of biological role, produced by the cleavage by papain allergen. After cleavage, moves to the plasma membrane and homooligomerizes within the membrane and forms pores of 10-15 nanometers (nm) of inner diameter, allowing the specific release of mature interleukin-33 (IL33), promoting type 2 inflammatory immune response. This Homo sapiens (Human) protein is Gasdermin-D.